Consider the following 340-residue polypeptide: Phosphoribosylformylglycinamidine cyclo-ligase (340 aa).

This sequence belongs to the AIR synthase family.

It localises to the cytoplasm. The enzyme catalyses 2-formamido-N(1)-(5-O-phospho-beta-D-ribosyl)acetamidine + ATP = 5-amino-1-(5-phospho-beta-D-ribosyl)imidazole + ADP + phosphate + H(+). It participates in purine metabolism; IMP biosynthesis via de novo pathway; 5-amino-1-(5-phospho-D-ribosyl)imidazole from N(2)-formyl-N(1)-(5-phospho-D-ribosyl)glycinamide: step 2/2. The protein is Phosphoribosylformylglycinamidine cyclo-ligase of Streptococcus agalactiae serotype V (strain ATCC BAA-611 / 2603 V/R).